A 310-amino-acid polypeptide reads, in one-letter code: Acetyl-coenzyme A carboxylase carboxyl transferase subunit beta, chloroplastic (310 aa).

One can recognise a CoA carboxyltransferase N-terminal domain in the interval L47–N310. 4 residues coordinate Zn(2+): C51, C54, C70, and C73. Residues C51–C73 form a C4-type zinc finger.

This sequence belongs to the AccD/PCCB family. Acetyl-CoA carboxylase is a heterohexamer composed of biotin carboxyl carrier protein, biotin carboxylase and 2 subunits each of ACCase subunit alpha and ACCase plastid-coded subunit beta (accD). Zn(2+) serves as cofactor.

Its subcellular location is the plastid. It is found in the chloroplast stroma. The catalysed reaction is N(6)-carboxybiotinyl-L-lysyl-[protein] + acetyl-CoA = N(6)-biotinyl-L-lysyl-[protein] + malonyl-CoA. It functions in the pathway lipid metabolism; malonyl-CoA biosynthesis; malonyl-CoA from acetyl-CoA: step 1/1. Component of the acetyl coenzyme A carboxylase (ACC) complex. Biotin carboxylase (BC) catalyzes the carboxylation of biotin on its carrier protein (BCCP) and then the CO(2) group is transferred by the transcarboxylase to acetyl-CoA to form malonyl-CoA. This chain is Acetyl-coenzyme A carboxylase carboxyl transferase subunit beta, chloroplastic, found in Adiantum capillus-veneris (Maidenhair fern).